The chain runs to 388 residues: Processive diacylglycerol beta-glucosyltransferase (388 aa).

This sequence belongs to the glycosyltransferase 28 family. UgtP subfamily.

It localises to the cell membrane. It carries out the reaction a 1,2-diacyl-3-O-(beta-D-glucopyranosyl)-sn-glycerol + UDP-alpha-D-glucose = a 1,2-diacyl-3-O-(beta-D-Glc-(1-&gt;6)-beta-D-Glc)-sn-glycerol + UDP + H(+). The catalysed reaction is a 1,2-diacyl-3-O-(beta-D-Glc-(1-&gt;6)-beta-D-Glc)-sn-glycerol + UDP-alpha-D-glucose = a 1,2-diacyl-3-O-(beta-D-Glc-(1-&gt;6)-beta-D-Glc-(1-&gt;6)-beta-D-Glc)-sn-glycerol + UDP + H(+). The enzyme catalyses a 1,2-diacyl-sn-glycerol + UDP-alpha-D-glucose = a 1,2-diacyl-3-O-(beta-D-glucopyranosyl)-sn-glycerol + UDP + H(+). Its pathway is glycolipid metabolism; diglucosyl-diacylglycerol biosynthesis. Functionally, processive glucosyltransferase involved in the biosynthesis of both the bilayer- and non-bilayer-forming membrane glucolipids. Is able to successively transfer up to three glucosyl residues to diacylglycerol (DAG), thereby catalyzing the formation of beta-monoglucosyl-DAG (3-O-(beta-D-glucopyranosyl)-1,2-diacyl-sn-glycerol), beta-diglucosyl-DAG (3-O-(beta-D-glucopyranosyl-beta-(1-&gt;6)-D-glucopyranosyl)-1,2-diacyl-sn-glycerol) and beta-triglucosyl-DAG (3-O-(beta-D-glucopyranosyl-beta-(1-&gt;6)-D-glucopyranosyl-beta-(1-&gt;6)-D-glucopyranosyl)-1,2-diacyl-sn-glycerol). Beta-diglucosyl-DAG is the predominant glycolipid found in Bacillales and is also used as a membrane anchor for lipoteichoic acid (LTA). This chain is Processive diacylglycerol beta-glucosyltransferase, found in Bacillus cytotoxicus (strain DSM 22905 / CIP 110041 / 391-98 / NVH 391-98).